Reading from the N-terminus, the 216-residue chain is Ras-related protein Rab-2B (216 aa).

GDP-binding residues include G16, V17, G18, K19, S20, and C21. The GTP site is built by G16, V17, G18, K19, S20, C21, and T38. Residue S20 participates in Mg(2+) binding. A Switch 1 motif is present at residues 37–42 (LTIGVE). Positions 38 and 61 each coordinate Mg(2+). The short motif at 63–72 (AGQESFRSIT) is the Switch 2 element. GTP is bound by residues G64, N119, K120, D122, A150, and K151. A GDP-binding site is contributed by N119. D122, A150, and K151 together coordinate GDP. The disordered stretch occupies residues 189–216 (PQQSISTSVGPSASQRNSRDIGSNSGCC). At S202 the chain carries Phosphoserine. Residues C215 and C216 are each lipidated (S-geranylgeranyl cysteine).

Belongs to the small GTPase superfamily. Rab family. As to quaternary structure, interacts (in GTP-bound form) with GARIN4 (via N-terminus). Interacts (in GTP-bound form) with GARIN5A. Interacts (in GTP-bound form) with GARIN1B. Interacts with VPS39 and VPS41. The cofactor is Mg(2+). In terms of tissue distribution, expressed in kidney, prostate, lung, liver, thymus, colon, pancreas, and skeletal muscle, and low levels in placenta. Not detected in heart, brain, spleen, testis, ovary, small intestine and leukocyte.

It localises to the cell membrane. The protein resides in the endoplasmic reticulum membrane. The protein localises to the golgi apparatus membrane. It is found in the cytoplasmic vesicle. Its subcellular location is the secretory vesicle. It localises to the acrosome. The protein resides in the autophagosome membrane. It catalyses the reaction GTP + H2O = GDP + phosphate + H(+). Regulated by guanine nucleotide exchange factors (GEFs) which promote the exchange of bound GDP for free GTP, GTPase activating proteins (GAPs) which increase the GTP hydrolysis activity, and GDP dissociation inhibitors (GDIs) which inhibit the dissociation of the nucleotide from the GTPase. In terms of biological role, the small GTPases Rab are key regulators of intracellular membrane trafficking, from the formation of transport vesicles to their fusion with membranes. Rabs cycle between active GTP-bound and inactive GDP-bound states. In their active state, drive transport of vesicular carriers from donor organelles to acceptor organelles to regulate the membrane traffic that maintains organelle identity and morphology. Regulates the compacted morphology of the Golgi. Promotes cytosolic DNA-induced innate immune responses. Regulates IFN responses against DNA viruses by regulating the CGAS-STING signaling axis. Together with RAB2A redundantly required for efficient autophagic flux. The sequence is that of Ras-related protein Rab-2B from Homo sapiens (Human).